The chain runs to 294 residues: MQQLVRAGARAWLRPRGCRGLSALTEEAVQSAEKPEPLANAGPQAPVLRRCELPVPLHRRPVQAWVESLRGYEQERVGLTELHPDVFSTAPRLDILHQVAIWQKNFKRISYAKTKTRAEVRGGGRKPWQQKGSGRARHGSIRSPIWRGGGVAHGPRGPTSYYYMLPMKVRVQGLKVALTVKLAQDDLHIVDSLELPTTDPQYLMELARYRRWGDSVLFVDLEHEDMPQNVVAATSGLKTFNLIPAIGLNVHSMLKHQTLVLTLPTVAFLEEKLLWHDSRYTPLYPFRLPYRDFP.

The segment at 120 to 139 is disordered; it reads VRGGGRKPWQQKGSGRARHG. Arginine 147 is subject to Omega-N-methylarginine.

This sequence belongs to the universal ribosomal protein uL4 family. Component of the mitochondrial ribosome large subunit (39S) which comprises a 16S rRNA and about 50 distinct proteins. Interacts with MIEF1 upstream open reading frame protein.

The protein localises to the mitochondrion. The sequence is that of Large ribosomal subunit protein uL4m (MRPL4) from Bos taurus (Bovine).